The sequence spans 193 residues: ATP-dependent Clp protease proteolytic subunit 2 (193 aa).

The active-site Nucleophile is the Ser-98. Residue His-123 is part of the active site.

Belongs to the peptidase S14 family. Fourteen ClpP subunits assemble into 2 heptameric rings which stack back to back to give a disk-like structure with a central cavity, resembling the structure of eukaryotic proteasomes.

It localises to the cytoplasm. The catalysed reaction is Hydrolysis of proteins to small peptides in the presence of ATP and magnesium. alpha-casein is the usual test substrate. In the absence of ATP, only oligopeptides shorter than five residues are hydrolyzed (such as succinyl-Leu-Tyr-|-NHMec, and Leu-Tyr-Leu-|-Tyr-Trp, in which cleavage of the -Tyr-|-Leu- and -Tyr-|-Trp bonds also occurs).. Cleaves peptides in various proteins in a process that requires ATP hydrolysis. Has a chymotrypsin-like activity. Plays a major role in the degradation of misfolded proteins. This Bacillus anthracis protein is ATP-dependent Clp protease proteolytic subunit 2.